A 329-amino-acid polypeptide reads, in one-letter code: Cytosolic arginine sensor for mTORC1 subunit 2 (329 aa).

ACT domains follow at residues 72 to 140 (ADAT…HTLS) and 262 to 322 (ELWK…HALK).

This sequence belongs to the GATS family. As to quaternary structure, forms homodimers and heterodimers with CASTOR1. Interacts with the GATOR2 complex which is composed of MIOS, SEC13, SEH1L, WDR24 and WDR59; the interaction is not regulated by arginine.

It localises to the cytoplasm. The protein localises to the cytosol. Its function is as follows. Functions as a negative regulator of the TORC1 signaling pathway through the GATOR complex. As part of homodimers or heterodimers with CASTOR1, directly binds and inhibits the GATOR subcomplex GATOR2 and thereby mTORC1. Does not directly bind arginine, but binding of arginine to CASTOR1 disrupts the interaction of CASTOR2-containing heterodimers with GATOR2 which can in turn activate mTORC1 and the TORC1 signaling pathway. The chain is Cytosolic arginine sensor for mTORC1 subunit 2 from Mus musculus (Mouse).